The primary structure comprises 142 residues: Peptide methionine sulfoxide reductase MsrB (142 aa).

Positions 13–135 (EKDWKVELSE…NSLSMTFKGE (123 aa)) constitute a MsrB domain. The Zn(2+) site is built by C52, C55, C101, and C104. Catalysis depends on C124, which acts as the Nucleophile.

This sequence belongs to the MsrB Met sulfoxide reductase family. It depends on Zn(2+) as a cofactor.

The catalysed reaction is L-methionyl-[protein] + [thioredoxin]-disulfide + H2O = L-methionyl-(R)-S-oxide-[protein] + [thioredoxin]-dithiol. This is Peptide methionine sulfoxide reductase MsrB from Alteromonas mediterranea (strain DSM 17117 / CIP 110805 / LMG 28347 / Deep ecotype).